Reading from the N-terminus, the 181-residue chain is Oligoribonuclease (181 aa).

The Exonuclease domain maps to 8–171 (LIWIDLEMTG…QDIQESIAEL (164 aa)). Tyr129 is an active-site residue.

It belongs to the oligoribonuclease family.

The protein resides in the cytoplasm. Its function is as follows. 3'-to-5' exoribonuclease specific for small oligoribonucleotides. The protein is Oligoribonuclease of Shewanella sp. (strain MR-4).